A 222-amino-acid chain; its full sequence is UPF0502 protein XAC4278 (222 aa).

Belongs to the UPF0502 family.

This chain is UPF0502 protein XAC4278, found in Xanthomonas axonopodis pv. citri (strain 306).